A 628-amino-acid polypeptide reads, in one-letter code: Pinene synthase, chloroplastic (628 aa).

A chloroplast-targeting transit peptide spans 1-36 (MALVSTAPLASKSCLHKSLISSTHELKALSRTIPAL). Residues aspartate 379, aspartate 383, and aspartate 531 each coordinate Mg(2+). The short motif at 379–383 (DDMYD) is the DDXXD motif element.

The protein belongs to the terpene synthase family. Tpsd subfamily. The cofactor is Mg(2+). It depends on Mn(2+) as a cofactor. K(+) is required as a cofactor.

Its subcellular location is the plastid. The protein resides in the chloroplast. The catalysed reaction is (2E)-geranyl diphosphate = (1S,5S)-alpha-pinene + diphosphate. The enzyme catalyses (2E)-geranyl diphosphate = (1S,5S)-beta-pinene + diphosphate. It functions in the pathway terpene metabolism; oleoresin biosynthesis. Involved in defensive oleoresin formation in conifers in response to insect attack or other injury. Involved in monoterpene (C10) olefins biosynthesis. A mixture of alpha- and beta-pinene is produced by this enzyme. This Abies grandis (Grand fir) protein is Pinene synthase, chloroplastic (ag3).